A 446-amino-acid chain; its full sequence is MRKHFGTDGIRGRANVVITPELALKVGQAAGVIFQRGDHRHRVVIGKDTRLSGYMIETALVAGFTSVGMDVLLLGPMPTPAVAMLTRSMRADIGVMISASHNPYEDNGIKLFGPDGFKLNDDLELEIESLIDGDMRNRLSASRDLGRAKRIESVHARYIEFAKRTLPRHVTLDGLRVVVDCANGAAYRVAPETLWELGAEVISIGVEPDGFNINHDVGSTAPETLVQKVRELRADVGIALDGDADRVLIVDEKGQKVDGDQLMAAVARSWQEDERLTQPGLVATIMSNLGLERYINSIGLTLARTAVGDRYVLEHMRQHGYNLGGEQSGHIIMSDYATTGDGLVAALQLLSVVKRRNLPVSEVCHCFEPLPQILKNVRFRSGEPLRADSVVTAIAHAKDRLGQSGRLVIRPSGTEPVIRVMAEGDDRDLVAEVVDEVVDAVTRAAA.

Ser-100 acts as the Phosphoserine intermediate in catalysis. Mg(2+)-binding residues include Ser-100, Asp-241, Asp-243, and Asp-245. Ser-100 is modified (phosphoserine).

Belongs to the phosphohexose mutase family. Mg(2+) is required as a cofactor. Activated by phosphorylation.

The enzyme catalyses alpha-D-glucosamine 1-phosphate = D-glucosamine 6-phosphate. Its function is as follows. Catalyzes the conversion of glucosamine-6-phosphate to glucosamine-1-phosphate. This is Phosphoglucosamine mutase from Methylorubrum extorquens (strain CM4 / NCIMB 13688) (Methylobacterium extorquens).